A 511-amino-acid chain; its full sequence is U3 snoRNP-associated protein-like YAOH (511 aa).

The span at 1 to 18 (MAPRPRKRVSRPKPRATS) shows a compositional bias: basic residues. A disordered region spans residues 1–117 (MAPRPRKRVS…EDEDEGEEAG (117 aa)). Acidic residues-rich tracts occupy residues 44 to 53 (EDIESEDSDL) and 66 to 80 (DDGEEEEEEEEEQET). Basic and acidic residues predominate over residues 81–105 (AGEKKMRIAKELLKKVTDAARRRRE). WD repeat units follow at residues 158–197 (KHRQPVTAVVLSKDSDKGFSASKDGVIVHWDVETGKSEKY), 217–256 (KRSKQVLALAVSADGRYLASGGLDRHIHLWDVRSREHIQA), 259–298 (GHRGAISCLSFGPDSSELFSGSFDRKIMQWNAEDRTYMNC), 301–339 (GHQNEVLTMDALSKDRLLTVARDRTMHLWKIPEESQLLF), 342–380 (PATASLECCCFIDDKEFLTGSDDGSVELWSIMRKKPTHI), 412–451 (SAQSWVSAIAARRGSDLAASGAANGSVRLWAIEPDSKGIR), and 457–497 (RLDG…QNGV).

This sequence belongs to the WD repeat RRP9 family.

The protein resides in the nucleus. It localises to the nucleolus. Component of a nucleolar small nuclear ribonucleoprotein particle (snoRNP) thought to participate in the processing and modification of pre-ribosomal RNA. Essential for embryogenesis. The protein is U3 snoRNP-associated protein-like YAOH of Oryza sativa subsp. japonica (Rice).